The primary structure comprises 793 residues: Translocase of chloroplast 90, chloroplastic (793 aa).

The disordered stretch occupies residues 22 to 59 (LGSDPFFRDPHQEQDNHSQAPAAPQPVTLSEPPCSTSS). Positions 27 to 37 (FFRDPHQEQDN) are enriched in basic and acidic residues. Residues 130–157 (LIRAEESELKNVKLRQDRAKALAREQES) adopt a coiled-coil conformation. One can recognise an AIG1-type G domain in the interval 164–394 (DFSLRILVLG…FRDSIGLGQP (231 aa)). The interval 173–180 (GKTGVGKS) is G1. GTP-binding positions include 176–181 (GVGKSA) and 195–200 (DAFRPG). Serine 180 is a Mg(2+) binding site. The segment at 195–198 (DAFR) is homodimerization. A G2 region spans residues 199-203 (PGTDR). The tract at residues 220–223 (DTPG) is G3. Positions 259–264 (RLDMID) are homodimerization. The helical transmembrane segment at 279-297 (IFGAAIWLNTILVMTHSAA) threads the bilayer. Positions 293 to 296 (THSA) are G4. Residues histidine 294 and 341–342 (EN) each bind GTP. The G5 stretch occupies residues 341–343 (ENH). Coiled-coil stretches lie at residues 410–442 (LRRR…YDQL) and 477–503 (KKQL…DTEQ).

This sequence belongs to the TRAFAC class TrmE-Era-EngA-EngB-Septin-like GTPase superfamily. AIG1/Toc34/Toc159-like paraseptin GTPase family. TOC159 subfamily. As to quaternary structure, homodimer. Part of the TOC core complex that includes 1 protein for the specific recognition of transit peptides surrounded by a ring composed of four proteins forming translocation channels, and four to five GTP-binding proteins providing energy. This core complex can interact with components of the TIC complex to form a larger import complex. Chloroplastic protein precursor such as prSS (precursor of the RuBisCO small subunit) interacts with these complexes. The TOC complex contains a specific subset of polar lipids such as digalactosyldiacylglyceride (DGDG), phosphatidylcholine (PC) and phosphatidylglycerol (PG). Interacts with TOC33 and TOC75. The cofactor is Mg(2+). In terms of tissue distribution, expressed in seedlings, leaves, flowers, and roots.

Its subcellular location is the plastid. The protein localises to the chloroplast outer membrane. It is found in the cytoplasm. Its function is as follows. GTPase involved in protein precursor import into chloroplasts. Seems to recognize chloroplast-destined precursor proteins and regulate their presentation to the translocation channel through GTP hydrolysis. Probably specialized in the import of nuclear encoded photosynthetic preproteins from the cytoplasm to the chloroplast. The chain is Translocase of chloroplast 90, chloroplastic (TOC90) from Arabidopsis thaliana (Mouse-ear cress).